We begin with the raw amino-acid sequence, 423 residues long: Serine--tRNA ligase (423 aa).

Position 231-233 (231-233) interacts with L-serine; the sequence is TGE. 262–264 contacts ATP; sequence RSE. Residue E285 participates in L-serine binding. 349–352 contacts ATP; sequence EISS. Position 385 (S385) interacts with L-serine.

The protein belongs to the class-II aminoacyl-tRNA synthetase family. Type-1 seryl-tRNA synthetase subfamily. Homodimer. The tRNA molecule binds across the dimer.

Its subcellular location is the cytoplasm. It catalyses the reaction tRNA(Ser) + L-serine + ATP = L-seryl-tRNA(Ser) + AMP + diphosphate + H(+). It carries out the reaction tRNA(Sec) + L-serine + ATP = L-seryl-tRNA(Sec) + AMP + diphosphate + H(+). It participates in aminoacyl-tRNA biosynthesis; selenocysteinyl-tRNA(Sec) biosynthesis; L-seryl-tRNA(Sec) from L-serine and tRNA(Sec): step 1/1. In terms of biological role, catalyzes the attachment of serine to tRNA(Ser). Is also able to aminoacylate tRNA(Sec) with serine, to form the misacylated tRNA L-seryl-tRNA(Sec), which will be further converted into selenocysteinyl-tRNA(Sec). This Coxiella burnetii (strain CbuK_Q154) (Coxiella burnetii (strain Q154)) protein is Serine--tRNA ligase.